The sequence spans 134 residues: Cell division protein SepF (134 aa).

This sequence belongs to the SepF family. As to quaternary structure, homodimer. Interacts with FtsZ.

The protein resides in the cytoplasm. Its function is as follows. Cell division protein that is part of the divisome complex and is recruited early to the Z-ring. Probably stimulates Z-ring formation, perhaps through the cross-linking of FtsZ protofilaments. Its function overlaps with FtsA. The sequence is that of Cell division protein SepF from Caldanaerobacter subterraneus subsp. tengcongensis (strain DSM 15242 / JCM 11007 / NBRC 100824 / MB4) (Thermoanaerobacter tengcongensis).